The following is a 444-amino-acid chain: C4-dicarboxylate transport protein 2 (444 aa).

The next 6 helical transmembrane spans lie at 23–43, 61–81, 95–115, 162–182, 198–218, and 236–256; these read ILYVQVLAAIVLGVIVGWLWP, LIKMAIAPIIFCTVVSGIAHI, LVYFEVVSTFALALGLVVANV, GEILQVLLFAILFGFALMGLG, AMFGVISIVVKVAPIGAFGAM, and LIATFYLTAFLFVVVGLGIIA.

It belongs to the dicarboxylate/amino acid:cation symporter (DAACS) (TC 2.A.23) family.

It is found in the cell inner membrane. Functionally, responsible for the transport of dicarboxylates such as succinate, fumarate, and malate from the periplasm across the membrane. The protein is C4-dicarboxylate transport protein 2 of Bradyrhizobium diazoefficiens (strain JCM 10833 / BCRC 13528 / IAM 13628 / NBRC 14792 / USDA 110).